The chain runs to 320 residues: Malate dehydrogenase (320 aa).

NAD(+) contacts are provided by residues 10–15 and Asp34; that span reads GAGQIG. Substrate contacts are provided by Arg83 and Arg89. Residues Asn96 and 119 to 121 contribute to the NAD(+) site; that span reads ITN. Residues Asn121 and Arg152 each coordinate substrate. The active-site Proton acceptor is His176.

It belongs to the LDH/MDH superfamily. MDH type 3 family.

The catalysed reaction is (S)-malate + NAD(+) = oxaloacetate + NADH + H(+). Catalyzes the reversible oxidation of malate to oxaloacetate. The sequence is that of Malate dehydrogenase from Methylobacterium radiotolerans (strain ATCC 27329 / DSM 1819 / JCM 2831 / NBRC 15690 / NCIMB 10815 / 0-1).